The sequence spans 392 residues: Pannexin-3 (392 aa).

The Cytoplasmic portion of the chain corresponds to 1–39; it reads MSLAHTAAEYMLSDALLPDRRGSRLKGLRLELPLDKMVK. The chain crosses the membrane as a helical span at residues 40-60; the sequence is FVTVGFPLLLMSLAFAQEFSS. Topologically, residues 61 to 113 are extracellular; the sequence is GSPISCFSPSNFSVRQAVFVDSSCWDSLAHYKQDEAGQYTVKSLWPHKALPYS. Residue asparagine 71 is glycosylated (N-linked (GlcNAc...) asparagine). A helical transmembrane segment spans residues 114 to 134; the sequence is LLALAVAMYLPVLLWQYAAVP. The Cytoplasmic portion of the chain corresponds to 135–215; the sequence is ALSSDLLFII…VATYLLRNAL (81 aa). Residues 216–236 form a helical membrane-spanning segment; that stretch reads LLLFTSATYLYLGHFHLDVFF. Residues 237 to 267 lie on the Extracellular side of the membrane; that stretch reads QEEFSCSIKTGLLHEETHVPELITCRLTSLS. The chain crosses the membrane as a helical span at residues 268-288; it reads VFQIVSVSSVAIYTVLVPVII. The Cytoplasmic segment spans residues 289–392; it reads YNLTRLCRWD…LTQHTYDEHP (104 aa).

Belongs to the pannexin family. Homoheptameric. Skin.

It localises to the cell membrane. Its subcellular location is the cell junction. The protein resides in the gap junction. The protein localises to the endoplasmic reticulum membrane. The catalysed reaction is Ca(2+)(in) = Ca(2+)(out). It carries out the reaction ATP(in) = ATP(out). In terms of biological role, regulator of osteoblast differentiation by functionning as a Ca(2+) channel in the endoplasmic reticulum which regulates calmodulin (CaM) pathways. Allows ATP release into the extracellular space and activation or purinergic receptors. The sequence is that of Pannexin-3 (Panx3) from Rattus norvegicus (Rat).